Consider the following 332-residue polypeptide: Phosphate acyltransferase (332 aa).

It belongs to the PlsX family. Homodimer. Probably interacts with PlsY.

Its subcellular location is the cytoplasm. It carries out the reaction a fatty acyl-[ACP] + phosphate = an acyl phosphate + holo-[ACP]. The protein operates within lipid metabolism; phospholipid metabolism. Its function is as follows. Catalyzes the reversible formation of acyl-phosphate (acyl-PO(4)) from acyl-[acyl-carrier-protein] (acyl-ACP). This enzyme utilizes acyl-ACP as fatty acyl donor, but not acyl-CoA. The polypeptide is Phosphate acyltransferase (Oceanobacillus iheyensis (strain DSM 14371 / CIP 107618 / JCM 11309 / KCTC 3954 / HTE831)).